We begin with the raw amino-acid sequence, 344 residues long: Ferrochelatase (344 aa).

The Fe cation site is built by histidine 211 and glutamate 292.

It belongs to the ferrochelatase family.

It is found in the cytoplasm. The enzyme catalyses heme b + 2 H(+) = protoporphyrin IX + Fe(2+). Its pathway is porphyrin-containing compound metabolism; protoheme biosynthesis; protoheme from protoporphyrin-IX: step 1/1. Functionally, catalyzes the ferrous insertion into protoporphyrin IX. This Methylobacillus flagellatus (strain ATCC 51484 / DSM 6875 / VKM B-1610 / KT) protein is Ferrochelatase.